The following is a 345-amino-acid chain: N-acetyl-gamma-glutamyl-phosphate reductase (345 aa).

C149 is an active-site residue.

It belongs to the NAGSA dehydrogenase family. Type 1 subfamily.

It localises to the cytoplasm. It catalyses the reaction N-acetyl-L-glutamate 5-semialdehyde + phosphate + NADP(+) = N-acetyl-L-glutamyl 5-phosphate + NADPH + H(+). Its pathway is amino-acid biosynthesis; L-arginine biosynthesis; N(2)-acetyl-L-ornithine from L-glutamate: step 3/4. Its function is as follows. Catalyzes the NADPH-dependent reduction of N-acetyl-5-glutamyl phosphate to yield N-acetyl-L-glutamate 5-semialdehyde. The protein is N-acetyl-gamma-glutamyl-phosphate reductase of Bacillus cereus (strain 03BB102).